Consider the following 60-residue polypeptide: MAVPRNRLSNARKNSKRAHHAKKPKSLSICSNCGTARLPHCSCKACGTYADRTPTTQEAQ.

Residues 1 to 27 (MAVPRNRLSNARKNSKRAHHAKKPKSL) form a disordered region. The span at 13-25 (KNSKRAHHAKKPK) shows a compositional bias: basic residues.

Belongs to the bacterial ribosomal protein bL32 family.

This chain is Large ribosomal subunit protein bL32, found in Protochlamydia amoebophila (strain UWE25).